Here is a 278-residue protein sequence, read N- to C-terminus: MPELPEVENVRRGLETLAVGKTVSAIDIRWSKIIVNPDEVFTAGLVGQQITAVDRRGKYLLIRFGEQLTVVSHLRMEGKYEVVAKEAPISKHTHVIFEFTDGQQMRYLDTRKFGRMQLIETGQENTVAGLKDLGPEPTPTTFLKADFYQRLQKHHKAIKPLLLDQKVVTGLGNIYVDETLWLSHIHPETPANDLTRAETDRLHDEIIAELELAINHGGTTVNTFLNATGHAGAFQEMLHVYGKKGVPCERCGTPIEKIKVAQRGTHFCPKCQIKRNAK.

Residue proline 2 is the Schiff-base intermediate with DNA of the active site. Glutamate 3 acts as the Proton donor in catalysis. Lysine 58 (proton donor; for beta-elimination activity) is an active-site residue. The DNA site is built by histidine 92 and arginine 111. An FPG-type zinc finger spans residues 239–273; sequence HVYGKKGVPCERCGTPIEKIKVAQRGTHFCPKCQI. Arginine 263 serves as the catalytic Proton donor; for delta-elimination activity.

It belongs to the FPG family. As to quaternary structure, monomer. Zn(2+) serves as cofactor.

It catalyses the reaction Hydrolysis of DNA containing ring-opened 7-methylguanine residues, releasing 2,6-diamino-4-hydroxy-5-(N-methyl)formamidopyrimidine.. The catalysed reaction is 2'-deoxyribonucleotide-(2'-deoxyribose 5'-phosphate)-2'-deoxyribonucleotide-DNA = a 3'-end 2'-deoxyribonucleotide-(2,3-dehydro-2,3-deoxyribose 5'-phosphate)-DNA + a 5'-end 5'-phospho-2'-deoxyribonucleoside-DNA + H(+). In terms of biological role, involved in base excision repair of DNA damaged by oxidation or by mutagenic agents. Acts as a DNA glycosylase that recognizes and removes damaged bases. Has a preference for oxidized purines, such as 7,8-dihydro-8-oxoguanine (8-oxoG). Has AP (apurinic/apyrimidinic) lyase activity and introduces nicks in the DNA strand. Cleaves the DNA backbone by beta-delta elimination to generate a single-strand break at the site of the removed base with both 3'- and 5'-phosphates. In Latilactobacillus sakei subsp. sakei (strain 23K) (Lactobacillus sakei subsp. sakei), this protein is Formamidopyrimidine-DNA glycosylase.